The sequence spans 287 residues: Hydroxysteroid 11-beta-dehydrogenase 1-like protein (287 aa).

Positions 1–15 (MKVLLLTGLGALFFA) are cleaved as a signal peptide. NADP(+) is bound by residues 36 to 62 (GASAGVGEELAYHYARLGSHLVLTAHT), 87 to 88 (DM), and 114 to 116 (NHI). Position 165 (S165) interacts with substrate. Y178 (proton acceptor) is an active-site residue. NADP(+)-binding positions include 178-182 (YSAAK) and 211-217 (GLRDRAS).

This sequence belongs to the short-chain dehydrogenases/reductases (SDR) family.

Its subcellular location is the secreted. The enzyme catalyses cortisone + NADPH + H(+) = cortisol + NADP(+). Functionally, unidirectional NADP(+)-dependent cortisol dehydrogenase (in vitro). The sequence is that of Hydroxysteroid 11-beta-dehydrogenase 1-like protein (HSD11B1L) from Macaca fascicularis (Crab-eating macaque).